Reading from the N-terminus, the 432-residue chain is Malate dehydrogenase [NADP], chloroplastic (432 aa).

Residues 1–40 constitute a chloroplast transit peptide; the sequence is MGLSTVYSPAGPRLVPAPLGRCRSAQPRRPRRAPLATVRC. The disordered stretch occupies residues 18–37; the sequence is PLGRCRSAQPRRPRRAPLAT. Residues cysteine 67 and cysteine 72 are joined by a disulfide bond. An NADP(+)-binding site is contributed by 96–102; sequence GAAGMIS. Substrate is bound by residues arginine 177 and arginine 183. Position 190 (asparagine 190) interacts with NADP(+). Glutamine 197 contributes to the NAD(+) binding site. Residue 214–216 participates in NADP(+) binding; it reads VGN. Residues asparagine 216 and arginine 247 each coordinate substrate. The active-site Proton acceptor is histidine 272. Cysteine 408 and cysteine 420 are joined by a disulfide.

This sequence belongs to the LDH/MDH superfamily. MDH type 2 family. Homodimer.

It localises to the plastid. The protein resides in the chloroplast. It catalyses the reaction (S)-malate + NADP(+) = oxaloacetate + NADPH + H(+). With respect to regulation, chloroplast NADP-MDH is activated upon illumination. In order to be enzymatically active, disulfide bridges on the protein must be reduced by thioredoxin which receives electrons from ferredoxin and the electron transport system of photosynthesis. The chloroplastic, NADP-dependent form is essential for the photosynthesis C4 cycle, which allows plants to circumvent the problem of photorespiration. In C4 plants, NADP-MDH activity acts to convert oxaloacetate to malate in chloroplasts of mesophyll cells for transport to the bundle sheath cells. This is Malate dehydrogenase [NADP], chloroplastic from Zea mays (Maize).